We begin with the raw amino-acid sequence, 261 residues long: Cytochrome c oxidase subunit 3 (261 aa).

Residues 1-15 (MTHQTHAYHMVNPSP) are Mitochondrial matrix-facing. A helical membrane pass occupies residues 16–34 (WPLTGALSALLMTSGLAMW). Topologically, residues 35-40 (FHFNSP) are mitochondrial intermembrane. A helical membrane pass occupies residues 41-66 (SLLLIGLVTNTLTMYQWWRDIVREGT). Over 67 to 72 (FQGHHT) the chain is Mitochondrial matrix. A helical membrane pass occupies residues 73–105 (PIVQKGLRYGMILFIISEVFFFAGFFWAFYHSS). The Mitochondrial intermembrane segment spans residues 106–128 (LAPTPELGGCWPPTGINPLNPLE). A helical membrane pass occupies residues 129–152 (VPLLNTSVLLASGVSITWAHHSLM). The Mitochondrial matrix portion of the chain corresponds to 153–155 (EGN). A helical membrane pass occupies residues 156–183 (RKNMQQALAITILLGIYFTLLQASEYYE). Residues 184–190 (TSFTISD) lie on the Mitochondrial intermembrane side of the membrane. A helical membrane pass occupies residues 191–223 (GVYGSTFFMATGFHGLHVIIGSTFLTVCLLRQF). Residues 224 to 232 (NFHFTSNHH) lie on the Mitochondrial matrix side of the membrane. A helical membrane pass occupies residues 233-256 (FGFEAAAWYWHFVDVVWLFLYVSI). At 257-261 (YWWGS) the chain is on the mitochondrial intermembrane side.

It belongs to the cytochrome c oxidase subunit 3 family. Component of the cytochrome c oxidase (complex IV, CIV), a multisubunit enzyme composed of 14 subunits. The complex is composed of a catalytic core of 3 subunits MT-CO1, MT-CO2 and MT-CO3, encoded in the mitochondrial DNA, and 11 supernumerary subunits COX4I, COX5A, COX5B, COX6A, COX6B, COX6C, COX7A, COX7B, COX7C, COX8 and NDUFA4, which are encoded in the nuclear genome. The complex exists as a monomer or a dimer and forms supercomplexes (SCs) in the inner mitochondrial membrane with NADH-ubiquinone oxidoreductase (complex I, CI) and ubiquinol-cytochrome c oxidoreductase (cytochrome b-c1 complex, complex III, CIII), resulting in different assemblies (supercomplex SCI(1)III(2)IV(1) and megacomplex MCI(2)III(2)IV(2)).

The protein resides in the mitochondrion inner membrane. It catalyses the reaction 4 Fe(II)-[cytochrome c] + O2 + 8 H(+)(in) = 4 Fe(III)-[cytochrome c] + 2 H2O + 4 H(+)(out). Component of the cytochrome c oxidase, the last enzyme in the mitochondrial electron transport chain which drives oxidative phosphorylation. The respiratory chain contains 3 multisubunit complexes succinate dehydrogenase (complex II, CII), ubiquinol-cytochrome c oxidoreductase (cytochrome b-c1 complex, complex III, CIII) and cytochrome c oxidase (complex IV, CIV), that cooperate to transfer electrons derived from NADH and succinate to molecular oxygen, creating an electrochemical gradient over the inner membrane that drives transmembrane transport and the ATP synthase. Cytochrome c oxidase is the component of the respiratory chain that catalyzes the reduction of oxygen to water. Electrons originating from reduced cytochrome c in the intermembrane space (IMS) are transferred via the dinuclear copper A center (CU(A)) of subunit 2 and heme A of subunit 1 to the active site in subunit 1, a binuclear center (BNC) formed by heme A3 and copper B (CU(B)). The BNC reduces molecular oxygen to 2 water molecules using 4 electrons from cytochrome c in the IMS and 4 protons from the mitochondrial matrix. In Oryctolagus cuniculus (Rabbit), this protein is Cytochrome c oxidase subunit 3 (MT-CO3).